We begin with the raw amino-acid sequence, 302 residues long: MKIAILSRNKRLYSTRRLVEAGEAAGHEMHVIDTLRCYMSMVAHKPEIHYKGEVLEGFDAVIPRIGASITQYGTAVVRQFEMMGVFPVNESVAISRSRDKLRSLQLLSRKGVGLPITGFAHSPDDIPDLINMVRGAPLVIKMLEGTQGIGVVLAETRKAAESVIEAFMGLNVSVMVQEYIKEAGGADIRCFVVGGKVIAAMKRQAAPGEFRSNLHRGGSASLIRITPEERATAVRAARIMGLNVAGVDILRSHHGPVVMEVNSSPGLEGIETATNKDVAGLLIKFIEKDARPYRTQTKGSKG.

The ATP-grasp domain occupies 104–287 (LQLLSRKGVG…VAGLLIKFIE (184 aa)). ATP is bound by residues Lys-141, 178–179 (EY), Asp-187, and 211–213 (RSN). Asp-248, Glu-260, and Asn-262 together coordinate Mg(2+). 3 residues coordinate Mn(2+): Asp-248, Glu-260, and Asn-262.

The protein belongs to the RimK family. Mg(2+) is required as a cofactor. Requires Mn(2+) as cofactor.

The chain is Probable alpha-L-glutamate ligase from Alcanivorax borkumensis (strain ATCC 700651 / DSM 11573 / NCIMB 13689 / SK2).